A 165-amino-acid polypeptide reads, in one-letter code: MANAKNQQTLSSLQGSLQGIETFYVVNYQGLTAGQLSELRKSIREKGGQLIVAKNTLINLALQDGGRDFGDALKGPSALVLAHEDPAGVAKALSDAAKKNDKGIPAIKGGFVEGNKVDVKVVERLASLGSKQSLQAEMVGVLSAHLSNFVGILEAYREKLEGENA.

The protein belongs to the universal ribosomal protein uL10 family. In terms of assembly, part of the ribosomal stalk of the 50S ribosomal subunit. The N-terminus interacts with L11 and the large rRNA to form the base of the stalk. The C-terminus forms an elongated spine to which L12 dimers bind in a sequential fashion forming a multimeric L10(L12)X complex.

Forms part of the ribosomal stalk, playing a central role in the interaction of the ribosome with GTP-bound translation factors. This is Large ribosomal subunit protein uL10 from Deinococcus deserti (strain DSM 17065 / CIP 109153 / LMG 22923 / VCD115).